A 212-amino-acid chain; its full sequence is Pyridoxine/pyridoxamine 5'-phosphate oxidase (212 aa).

Residues Arg-8–Tyr-11 and Lys-66 contribute to the substrate site. Residues Arg-61–Lys-66, Phe-76–Thr-77, Arg-82, Lys-83, and Gln-105 contribute to the FMN site. Positions 123, 127, and 131 each coordinate substrate. FMN contacts are provided by residues Gln-140–Ser-141 and Trp-184. Substrate is bound at residue Arg-190–His-192. FMN is bound at residue Arg-194.

This sequence belongs to the pyridoxamine 5'-phosphate oxidase family. As to quaternary structure, homodimer. FMN is required as a cofactor.

The enzyme catalyses pyridoxamine 5'-phosphate + O2 + H2O = pyridoxal 5'-phosphate + H2O2 + NH4(+). The catalysed reaction is pyridoxine 5'-phosphate + O2 = pyridoxal 5'-phosphate + H2O2. It functions in the pathway cofactor metabolism; pyridoxal 5'-phosphate salvage; pyridoxal 5'-phosphate from pyridoxamine 5'-phosphate: step 1/1. It participates in cofactor metabolism; pyridoxal 5'-phosphate salvage; pyridoxal 5'-phosphate from pyridoxine 5'-phosphate: step 1/1. Functionally, catalyzes the oxidation of either pyridoxine 5'-phosphate (PNP) or pyridoxamine 5'-phosphate (PMP) into pyridoxal 5'-phosphate (PLP). The polypeptide is Pyridoxine/pyridoxamine 5'-phosphate oxidase (Cupriavidus pinatubonensis (strain JMP 134 / LMG 1197) (Cupriavidus necator (strain JMP 134))).